A 185-amino-acid chain; its full sequence is Small ribosomal subunit protein uS7 (185 aa).

Belongs to the universal ribosomal protein uS7 family. As to quaternary structure, part of the 30S ribosomal subunit.

One of the primary rRNA binding proteins, it binds directly to 16S rRNA where it nucleates assembly of the head domain of the 30S subunit. Is located at the subunit interface close to the decoding center. This is Small ribosomal subunit protein uS7 from Methanosarcina barkeri (strain Fusaro / DSM 804).